Reading from the N-terminus, the 102-residue chain is uncharacterized protein (102 aa).

Residues 7–23 traverse the membrane as a helical segment; sequence IVFVSCVILGLAACSSQ.

The protein resides in the membrane. This is an uncharacterized protein from Haemophilus influenzae (strain ATCC 51907 / DSM 11121 / KW20 / Rd).